The chain runs to 307 residues: Acetaldehyde dehydrogenase 1 (307 aa).

Cys131 (acyl-thioester intermediate) is an active-site residue. NAD(+)-binding positions include 162 to 170 and Asn273; that span reads SIGPGTRKN.

Belongs to the acetaldehyde dehydrogenase family.

The catalysed reaction is acetaldehyde + NAD(+) + CoA = acetyl-CoA + NADH + H(+). This is Acetaldehyde dehydrogenase 1 (salG) from Metapseudomonas furukawaii (Pseudomonas furukawaii).